Consider the following 957-residue polypeptide: Glycine dehydrogenase (decarboxylating) (957 aa).

Lys708 bears the N6-(pyridoxal phosphate)lysine mark.

Belongs to the GcvP family. As to quaternary structure, the glycine cleavage system is composed of four proteins: P, T, L and H. Pyridoxal 5'-phosphate serves as cofactor.

It carries out the reaction N(6)-[(R)-lipoyl]-L-lysyl-[glycine-cleavage complex H protein] + glycine + H(+) = N(6)-[(R)-S(8)-aminomethyldihydrolipoyl]-L-lysyl-[glycine-cleavage complex H protein] + CO2. The glycine cleavage system catalyzes the degradation of glycine. The P protein binds the alpha-amino group of glycine through its pyridoxal phosphate cofactor; CO(2) is released and the remaining methylamine moiety is then transferred to the lipoamide cofactor of the H protein. This Salmonella arizonae (strain ATCC BAA-731 / CDC346-86 / RSK2980) protein is Glycine dehydrogenase (decarboxylating).